We begin with the raw amino-acid sequence, 635 residues long: Threonine--tRNA ligase (635 aa).

The region spanning 1-61 (MINISFPDGS…DNDCKLRILT (61 aa)) is the TGS domain. A catalytic region spans residues 242–533 (DHRKLGRELD…LIEEYAGRFP (292 aa)). Residues cysteine 333, histidine 384, and histidine 510 each contribute to the Zn(2+) site.

The protein belongs to the class-II aminoacyl-tRNA synthetase family. In terms of assembly, homodimer. Requires Zn(2+) as cofactor.

It is found in the cytoplasm. It carries out the reaction tRNA(Thr) + L-threonine + ATP = L-threonyl-tRNA(Thr) + AMP + diphosphate + H(+). In terms of biological role, catalyzes the attachment of threonine to tRNA(Thr) in a two-step reaction: L-threonine is first activated by ATP to form Thr-AMP and then transferred to the acceptor end of tRNA(Thr). Also edits incorrectly charged L-seryl-tRNA(Thr). The sequence is that of Threonine--tRNA ligase from Rickettsia conorii (strain ATCC VR-613 / Malish 7).